Reading from the N-terminus, the 590-residue chain is UvrABC system protein C (590 aa).

The region spanning 15 to 92 (DLPGCYMMKD…IQKHKPYYNI (78 aa)) is the GIY-YIG domain. Residues 197-232 (SKIKKELEQKMETASENLEFERAAEIRDQIHYVEMT) form the UVR domain.

It belongs to the UvrC family. In terms of assembly, interacts with UvrB in an incision complex.

It is found in the cytoplasm. Its function is as follows. The UvrABC repair system catalyzes the recognition and processing of DNA lesions. UvrC both incises the 5' and 3' sides of the lesion. The N-terminal half is responsible for the 3' incision and the C-terminal half is responsible for the 5' incision. This Ligilactobacillus salivarius (strain UCC118) (Lactobacillus salivarius) protein is UvrABC system protein C.